Reading from the N-terminus, the 319-residue chain is Methionyl-tRNA formyltransferase (319 aa).

Residue Ser-115–Pro-118 participates in (6S)-5,6,7,8-tetrahydrofolate binding.

It belongs to the Fmt family.

The enzyme catalyses L-methionyl-tRNA(fMet) + (6R)-10-formyltetrahydrofolate = N-formyl-L-methionyl-tRNA(fMet) + (6S)-5,6,7,8-tetrahydrofolate + H(+). In terms of biological role, attaches a formyl group to the free amino group of methionyl-tRNA(fMet). The formyl group appears to play a dual role in the initiator identity of N-formylmethionyl-tRNA by promoting its recognition by IF2 and preventing the misappropriation of this tRNA by the elongation apparatus. The polypeptide is Methionyl-tRNA formyltransferase (Lactococcus lactis subsp. lactis (strain IL1403) (Streptococcus lactis)).